A 464-amino-acid polypeptide reads, in one-letter code: ATP synthase subunit beta (464 aa).

Residue 153-160 (GGAGVGKT) coordinates ATP.

Belongs to the ATPase alpha/beta chains family. As to quaternary structure, F-type ATPases have 2 components, CF(1) - the catalytic core - and CF(0) - the membrane proton channel. CF(1) has five subunits: alpha(3), beta(3), gamma(1), delta(1), epsilon(1). CF(0) has three main subunits: a(1), b(2) and c(9-12). The alpha and beta chains form an alternating ring which encloses part of the gamma chain. CF(1) is attached to CF(0) by a central stalk formed by the gamma and epsilon chains, while a peripheral stalk is formed by the delta and b chains.

It is found in the cell inner membrane. The catalysed reaction is ATP + H2O + 4 H(+)(in) = ADP + phosphate + 5 H(+)(out). Functionally, produces ATP from ADP in the presence of a proton gradient across the membrane. The catalytic sites are hosted primarily by the beta subunits. The sequence is that of ATP synthase subunit beta from Burkholderia vietnamiensis (strain G4 / LMG 22486) (Burkholderia cepacia (strain R1808)).